The following is a 507-amino-acid chain: Probable lipid II flippase MurJ (507 aa).

Helical transmembrane passes span 3-23 (LFRS…FGLV), 54-74 (IFAE…KMLI), 92-112 (LTLI…ILCI), 132-152 (ITIP…ILNS), 156-176 (FAAF…FTLI), 185-205 (ISIS…MFIC), 268-288 (IYQF…LPEM), 310-330 (IGLL…HPIT), 351-371 (ISAF…TPIF), 379-399 (TPLK…LLLM), 405-425 (IGIA…LYSY), 438-458 (IKLF…IIAL), and 472-492 (LLIK…IFFG).

It belongs to the MurJ/MviN family.

It localises to the cell inner membrane. It participates in cell wall biogenesis; peptidoglycan biosynthesis. In terms of biological role, involved in peptidoglycan biosynthesis. Transports lipid-linked peptidoglycan precursors from the inner to the outer leaflet of the cytoplasmic membrane. In Rickettsia prowazekii (strain Madrid E), this protein is Probable lipid II flippase MurJ.